The chain runs to 285 residues: Pantothenate synthetase (285 aa).

30 to 37 is a binding site for ATP; that stretch reads MGYLHAGH. Histidine 37 functions as the Proton donor in the catalytic mechanism. Position 61 (glutamine 61) interacts with (R)-pantoate. Beta-alanine is bound at residue glutamine 61. 147–150 provides a ligand contact to ATP; it reads GQKD. A (R)-pantoate-binding site is contributed by glutamine 153. ATP is bound by residues valine 176 and 184-187; that span reads LSSR.

This sequence belongs to the pantothenate synthetase family. As to quaternary structure, homodimer.

Its subcellular location is the cytoplasm. It carries out the reaction (R)-pantoate + beta-alanine + ATP = (R)-pantothenate + AMP + diphosphate + H(+). It functions in the pathway cofactor biosynthesis; (R)-pantothenate biosynthesis; (R)-pantothenate from (R)-pantoate and beta-alanine: step 1/1. Catalyzes the condensation of pantoate with beta-alanine in an ATP-dependent reaction via a pantoyl-adenylate intermediate. This is Pantothenate synthetase from Solidesulfovibrio magneticus (strain ATCC 700980 / DSM 13731 / RS-1) (Desulfovibrio magneticus).